A 488-amino-acid chain; its full sequence is Multidrug resistance outer membrane protein MdtP (488 aa).

The signal sequence occupies residues 1–23 (MINRQLSRLLLCSILGSTTLISG). A lipid anchor (N-palmitoyl cysteine) is attached at Cys24. Cys24 is lipidated: S-diacylglycerol cysteine.

Belongs to the outer membrane factor (OMF) (TC 1.B.17) family. In terms of assembly, could be part of a tripartite efflux system composed of MdtN, MdtO and MdtP.

It is found in the cell outer membrane. In terms of biological role, could be involved in resistance to puromycin, acriflavine and tetraphenylarsonium chloride. This chain is Multidrug resistance outer membrane protein MdtP (mdtP), found in Escherichia coli O157:H7.